Here is a 468-residue protein sequence, read N- to C-terminus: Methylenetetrahydrofolate--tRNA-(uracil-5-)-methyltransferase TrmFO (468 aa).

10-15 is a binding site for FAD; it reads GGGLAG.

This sequence belongs to the MnmG family. TrmFO subfamily. It depends on FAD as a cofactor.

It is found in the cytoplasm. The catalysed reaction is uridine(54) in tRNA + (6R)-5,10-methylene-5,6,7,8-tetrahydrofolate + NADH + H(+) = 5-methyluridine(54) in tRNA + (6S)-5,6,7,8-tetrahydrofolate + NAD(+). The enzyme catalyses uridine(54) in tRNA + (6R)-5,10-methylene-5,6,7,8-tetrahydrofolate + NADPH + H(+) = 5-methyluridine(54) in tRNA + (6S)-5,6,7,8-tetrahydrofolate + NADP(+). Catalyzes the folate-dependent formation of 5-methyl-uridine at position 54 (M-5-U54) in all tRNAs. This chain is Methylenetetrahydrofolate--tRNA-(uracil-5-)-methyltransferase TrmFO, found in Chelativorans sp. (strain BNC1).